The primary structure comprises 231 residues: Cytochrome c oxidase subunit 2 (231 aa).

Residues 1–30 are Mitochondrial intermembrane-facing; sequence MNNFFQGYNLLFQHSLFASYMDWFHAFNCS. Residues 31–51 traverse the membrane as a helical segment; it reads LLLGVLVFVTLLFGYLIFSTF. The Mitochondrial matrix portion of the chain corresponds to 52 to 64; it reads YFKSKKIEYQFGE. Residues 65–85 traverse the membrane as a helical segment; sequence LLCSIFPTIILLMQMVPSLSL. Topologically, residues 86–231 are mitochondrial intermembrane; that stretch reads LYYYGLMNLD…FKSWCFGTME (146 aa). Positions 164, 199, 201, 203, 207, and 210 each coordinate Cu cation. E201 provides a ligand contact to Mg(2+).

It belongs to the cytochrome c oxidase subunit 2 family. In terms of assembly, component of the cytochrome c oxidase (complex IV, CIV), a multisubunit enzyme composed of a catalytic core of 3 subunits and several supernumerary subunits. The complex exists as a monomer or a dimer and forms supercomplexes (SCs) in the inner mitochondrial membrane with ubiquinol-cytochrome c oxidoreductase (cytochrome b-c1 complex, complex III, CIII). The cofactor is Cu cation.

It is found in the mitochondrion inner membrane. It catalyses the reaction 4 Fe(II)-[cytochrome c] + O2 + 8 H(+)(in) = 4 Fe(III)-[cytochrome c] + 2 H2O + 4 H(+)(out). Component of the cytochrome c oxidase, the last enzyme in the mitochondrial electron transport chain which drives oxidative phosphorylation. The respiratory chain contains 3 multisubunit complexes succinate dehydrogenase (complex II, CII), ubiquinol-cytochrome c oxidoreductase (cytochrome b-c1 complex, complex III, CIII) and cytochrome c oxidase (complex IV, CIV), that cooperate to transfer electrons derived from NADH and succinate to molecular oxygen, creating an electrochemical gradient over the inner membrane that drives transmembrane transport and the ATP synthase. Cytochrome c oxidase is the component of the respiratory chain that catalyzes the reduction of oxygen to water. Electrons originating from reduced cytochrome c in the intermembrane space (IMS) are transferred via the dinuclear copper A center (CU(A)) of subunit 2 and heme A of subunit 1 to the active site in subunit 1, a binuclear center (BNC) formed by heme A3 and copper B (CU(B)). The BNC reduces molecular oxygen to 2 water molecules using 4 electrons from cytochrome c in the IMS and 4 protons from the mitochondrial matrix. The polypeptide is Cytochrome c oxidase subunit 2 (cox-2) (Caenorhabditis briggsae).